The primary structure comprises 329 residues: Lipoyl synthase (329 aa).

A disordered region spans residues Met1 to Lys23. [4Fe-4S] cluster is bound by residues Cys76, Cys81, Cys87, Cys102, Cys106, Cys109, and Ser316. Residues Cys87–Thr305 enclose the Radical SAM core domain.

Belongs to the radical SAM superfamily. Lipoyl synthase family. The cofactor is [4Fe-4S] cluster.

Its subcellular location is the cytoplasm. It carries out the reaction [[Fe-S] cluster scaffold protein carrying a second [4Fe-4S](2+) cluster] + N(6)-octanoyl-L-lysyl-[protein] + 2 oxidized [2Fe-2S]-[ferredoxin] + 2 S-adenosyl-L-methionine + 4 H(+) = [[Fe-S] cluster scaffold protein] + N(6)-[(R)-dihydrolipoyl]-L-lysyl-[protein] + 4 Fe(3+) + 2 hydrogen sulfide + 2 5'-deoxyadenosine + 2 L-methionine + 2 reduced [2Fe-2S]-[ferredoxin]. The protein operates within protein modification; protein lipoylation via endogenous pathway; protein N(6)-(lipoyl)lysine from octanoyl-[acyl-carrier-protein]: step 2/2. In terms of biological role, catalyzes the radical-mediated insertion of two sulfur atoms into the C-6 and C-8 positions of the octanoyl moiety bound to the lipoyl domains of lipoate-dependent enzymes, thereby converting the octanoylated domains into lipoylated derivatives. In Burkholderia pseudomallei (strain 1106a), this protein is Lipoyl synthase.